A 150-amino-acid polypeptide reads, in one-letter code: Large ribosomal subunit protein uL13 (150 aa).

The segment at 130 to 150 is disordered; that stretch reads EHPHGAQQPQPYQLNPSASIK. Polar residues predominate over residues 136 to 150; the sequence is QQPQPYQLNPSASIK.

The protein belongs to the universal ribosomal protein uL13 family. In terms of assembly, part of the 50S ribosomal subunit.

Its function is as follows. This protein is one of the early assembly proteins of the 50S ribosomal subunit, although it is not seen to bind rRNA by itself. It is important during the early stages of 50S assembly. This chain is Large ribosomal subunit protein uL13, found in Synechococcus sp. (strain RCC307).